We begin with the raw amino-acid sequence, 149 residues long: Protein AIM7 (149 aa).

Ser2 is subject to N-acetylserine. In terms of domain architecture, ADF-H spans 3-147 (NLYKIGTETR…DVEELREQLE (145 aa)). At Ser137 the chain carries Phosphoserine.

This sequence belongs to the actin-binding proteins ADF family. GMF subfamily.

It is found in the cytoplasm. Its subcellular location is the nucleus. In terms of biological role, may be involved in mitochondrial organization and biogenesis. The protein is Protein AIM7 (AIM7) of Saccharomyces cerevisiae (strain ATCC 204508 / S288c) (Baker's yeast).